The chain runs to 526 residues: Tyrosine 2,3-aminomutase (526 aa).

Tyrosine 41 functions as the Proton donor/acceptor in the catalytic mechanism. Residue histidine 71 coordinates substrate. A cross-link (5-imidazolinone (Ala-Gly)) is located at residues alanine 130 to glycine 132. At serine 131 the chain carries 2,3-didehydroalanine (Ser). The substrate site is built by asparagine 183 and arginine 288.

This sequence belongs to the TAL/TAM family. Homotetramer; dimer of dimers. In terms of processing, contains an active site 4-methylidene-imidazol-5-one (MIO), which is formed autocatalytically by cyclization and dehydration of residues Ala-Ser-Gly.

The enzyme catalyses L-tyrosine = 3-amino-3-(4-hydroxyphenyl)propanoate. It catalyses the reaction L-tyrosine = (E)-4-coumarate + NH4(+). In terms of biological role, has aminomutase and, to a much lesser extent, ammonia-lyase activity. Primarily, catalyzes the rearrangement of L-tyrosine to S-beta-tyrosine, which is probably incorporated into secondary metabolite myxovalargin. The aminomutase activity exclusively produces S-beta-tyrosine. The chain is Tyrosine 2,3-aminomutase from Myxococcus fulvus.